Consider the following 261-residue polypeptide: Global transcriptional regulator CodY (261 aa).

A GAF domain region spans residues 1 to 159 (MPNLLEKTRK…ASTVVGIQLL (159 aa)). A DNA-binding region (H-T-H motif) is located at residues 207-226 (ASVIADRIGITRSVIVNALR).

It belongs to the CodY family.

The protein localises to the cytoplasm. DNA-binding global transcriptional regulator which is involved in the adaptive response to starvation and acts by directly or indirectly controlling the expression of numerous genes in response to nutrient availability. During rapid exponential growth, CodY is highly active and represses genes whose products allow adaptation to nutrient depletion. In Streptococcus agalactiae serotype Ia (strain ATCC 27591 / A909 / CDC SS700), this protein is Global transcriptional regulator CodY.